We begin with the raw amino-acid sequence, 267 residues long: Energy-coupling factor transporter transmembrane protein EcfT (267 aa).

5 helical membrane-spanning segments follow: residues 30-50 (FWYV…LLVA), 67-87 (WAGL…QVLF), 110-130 (ALVI…LTAT), 152-172 (VPVN…PTIM), and 247-267 (SIAL…RILL).

It belongs to the energy-coupling factor EcfT family. Forms a stable energy-coupling factor (ECF) transporter complex composed of 2 membrane-embedded substrate-binding proteins (S component), 2 ATP-binding proteins (A component) and 2 transmembrane proteins (T component). May be able to interact with more than 1 S component at a time.

It localises to the cell membrane. Its function is as follows. Transmembrane (T) component of an energy-coupling factor (ECF) ABC-transporter complex. Unlike classic ABC transporters this ECF transporter provides the energy necessary to transport a number of different substrates. This chain is Energy-coupling factor transporter transmembrane protein EcfT, found in Limosilactobacillus fermentum (strain CECT 5716 / Lc40) (Lactobacillus fermentum).